A 428-amino-acid polypeptide reads, in one-letter code: MATIFKRVRLLNEQGELIQTDIKVAGGRIVQIAHDLHAEADDEVIDVDGQFVAPGFVDVHVHLREPGGEHKETIATGTLAAAKGGFTTIAAMPNTKPVPDTKQHMEWLVNRIRETAHVRVLPYASITVRQAGKQLVDFVALKEAGAFAFTDDGVGVQSARIMYEAMQQAAALDMPIVAHCEDETLTYKGCVHDGSFAKRYGLSGIPSVCESVHIARDVLLAEATGCHYHVCHISTKQSVRIVREAKQAGIRVTAEVTPHHLLLCDEDIPTLDANFKMNPPLRTKEDQQALIEGLLDGTIDFIATDHAPHTKEEKSEGMVLAPFGIVGLETAFPLLYTHFVEKGICTLKQLVDWLSKKPAETFRIDGGELKVGAKADFVVIDLHTEQAIDPNTFVSKGKNTPFAGWTCKGWPTMTIVAGKIVWQKGRGE.

Zn(2+)-binding residues include His60 and His62. Substrate-binding positions include 62–64 (HLR) and Asn94. The Zn(2+) site is built by Asp152, His179, and His232. Asn278 lines the substrate pocket. Asp305 contacts Zn(2+). Asp305 is a catalytic residue. Residues His309 and 323-324 (FG) each bind substrate.

It belongs to the metallo-dependent hydrolases superfamily. DHOase family. Class I DHOase subfamily. It depends on Zn(2+) as a cofactor.

It carries out the reaction (S)-dihydroorotate + H2O = N-carbamoyl-L-aspartate + H(+). The protein operates within pyrimidine metabolism; UMP biosynthesis via de novo pathway; (S)-dihydroorotate from bicarbonate: step 3/3. Catalyzes the reversible cyclization of carbamoyl aspartate to dihydroorotate. This Anoxybacillus flavithermus (strain DSM 21510 / WK1) protein is Dihydroorotase.